Here is a 116-residue protein sequence, read N- to C-terminus: Large ribosomal subunit protein bL20 (116 aa).

It belongs to the bacterial ribosomal protein bL20 family.

Binds directly to 23S ribosomal RNA and is necessary for the in vitro assembly process of the 50S ribosomal subunit. It is not involved in the protein synthesizing functions of that subunit. This is Large ribosomal subunit protein bL20 from Picosynechococcus sp. (strain ATCC 27264 / PCC 7002 / PR-6) (Agmenellum quadruplicatum).